A 793-amino-acid chain; its full sequence is Putative potassium transporter 8 (793 aa).

At 1-22 (MDLEFGRGMRSPQRDSWKTTLL) the chain is on the cytoplasmic side. Residues 23–43 (LAYQSLGVVYGDLSISPLYVF) traverse the membrane as a helical segment. At 44 to 59 (KSTFAEDIQHSETNEE) the chain is on the extracellular side. A helical membrane pass occupies residues 60 to 80 (IFGVLSFVFWTLTLIPLIKYV). The Cytoplasmic portion of the chain corresponds to 81-151 (SIVLRADDNG…EKHKKLHTAL (71 aa)). A helical transmembrane segment spans residues 152–172 (LIMVLIGTCMVIGDGVLTPAI). The Extracellular segment spans residues 173 to 191 (SVFSAVSGLEFSLSKDHRE). The chain crosses the membrane as a helical span at residues 192–212 (YAVIPITCVILAFLFALQHYG). Residues 213-215 (THR) lie on the Cytoplasmic side of the membrane. Residues 216–236 (VGFLFAPIVLAWLICMSALGL) form a helical membrane-spanning segment. At 237–264 (YNIIHWNPHVYQALNPCYMFKFLKKTRK) the chain is on the extracellular side. The chain crosses the membrane as a helical span at residues 265-285 (YGWMSLGGILLCMTGSEAMFA). The Cytoplasmic segment spans residues 286 to 292 (DLGHFSY). The helical transmembrane segment at 293-313 (SAIQLAFTSLVYPALILAYMG) threads the bilayer. Residues 314 to 343 (QAAYLSKHHDFYSNSQVGFYIAVPDKVRWP) are Extracellular-facing. Residues 344–364 (VLVLAILASVVGSQAIISGTF) traverse the membrane as a helical segment. Over 365–391 (SIINQSQSLSCFPRVKVVHTSDKIHGQ) the chain is Cytoplasmic. Residues 392 to 412 (IYIPEINWLLMILCIAVTVGF) traverse the membrane as a helical segment. At 413–422 (RDTKHMGNAS) the chain is on the extracellular side. Asparagine 420 carries N-linked (GlcNAc...) asparagine glycosylation. A helical membrane pass occupies residues 423–443 (GLAVITVMLVTTCLTSLVIML). The Cytoplasmic portion of the chain corresponds to 444–448 (CWRRP). The chain crosses the membrane as a helical span at residues 449-469 (PVLALCFLLFFGSVEALYFSA). Over 470 to 473 (SLIK) the chain is Extracellular. A helical transmembrane segment spans residues 474 to 494 (FLEGAWLPILLALFLMAVMLV). The Cytoplasmic portion of the chain corresponds to 495 to 793 (WHYTTIKKYE…LLEVGMVYVL (299 aa)). Residues 664-675 (DSVQHSSAASVE) show a composition bias toward polar residues. Positions 664-698 (DSVQHSSAASVETTTTRRRSGGGDDDGSPGGGGGR) are disordered.

The protein belongs to the HAK/KUP transporter (TC 2.A.72.3) family.

It localises to the membrane. High-affinity potassium transporter. This Oryza sativa subsp. japonica (Rice) protein is Putative potassium transporter 8 (HAK8).